The following is a 172-amino-acid chain: Austinoid biosynthesis clusters protein J (172 aa).

This sequence belongs to the trt14 isomerase family. Homodimer.

The protein operates within secondary metabolite biosynthesis; terpenoid biosynthesis. Part of the gene cluster B that mediates the biosynthesis of the fungal meroterpenoid acetoxydehydroaustin. The first step of the pathway is the synthesis of 3,5-dimethylorsellinic acid by the polyketide synthase ausA. 3,5-dimethylorsellinic acid is then prenylated by the polyprenyl transferase ausN. Further epoxidation by the FAD-dependent monooxygenase ausM and cyclization by the probable terpene cyclase ausL lead to the formation of protoaustinoid A. Protoaustinoid A is then oxidized to spiro-lactone preaustinoid A3 by the combined action of the FAD-binding monooxygenases ausB and ausC, and the dioxygenase ausE. Acid-catalyzed keto-rearrangement and ring contraction of the tetraketide portion of preaustinoid A3 by ausJ lead to the formation of preaustinoid A4. The aldo-keto reductase ausK, with the help of ausH, is involved in the next step by transforming preaustinoid A4 into isoaustinone which is in turn hydroxylated by the P450 monooxygenase ausI to form austinolide. The cytochrome P450 monooxygenase ausG then modifies austinolide to austinol. Austinol is further acetylated to austin by the O-acetyltransferase ausP, which spontaneously changes to dehydroaustin. The cytochrome P450 monooxygenase then converts dehydroaustin is into 7-dehydrodehydroaustin. The hydroxylation catalyzed by ausR permits the second O-acetyltransferase ausQ to add an additional acetyl group to the molecule, leading to the formation of acetoxydehydroaustin. Due to genetic rearrangements of the clusters and the subsequent loss of some enzymes, the end product of the Penicillium brasilianum austinoid biosynthesis clusters is acetoxydehydroaustin. This chain is Austinoid biosynthesis clusters protein J, found in Penicillium brasilianum.